The chain runs to 260 residues: Hydroxyethylthiazole kinase 1 (260 aa).

M39 contacts substrate. ATP is bound by residues R115 and T160. Substrate is bound at residue G187.

This sequence belongs to the Thz kinase family. Requires Mg(2+) as cofactor.

The catalysed reaction is 5-(2-hydroxyethyl)-4-methylthiazole + ATP = 4-methyl-5-(2-phosphooxyethyl)-thiazole + ADP + H(+). Its pathway is cofactor biosynthesis; thiamine diphosphate biosynthesis; 4-methyl-5-(2-phosphoethyl)-thiazole from 5-(2-hydroxyethyl)-4-methylthiazole: step 1/1. In terms of biological role, catalyzes the phosphorylation of the hydroxyl group of 4-methyl-5-beta-hydroxyethylthiazole (THZ). This is Hydroxyethylthiazole kinase 1 from Streptococcus pneumoniae (strain ATCC 700669 / Spain 23F-1).